A 477-amino-acid polypeptide reads, in one-letter code: Regulatory protein HrpB (477 aa).

Residues 375–477 (RRAYRYIIEN…NEAPSETIWR (103 aa)) enclose the HTH araC/xylS-type domain. 2 DNA-binding regions (H-T-H motif) span residues 393–414 (REVAAHINVTERALQLAFKSAV) and 444–467 (IIDTASRWGIRSRSALVKGYRKQF).

Functionally, positive regulation of hypersensitive response genes involved in plant pathogenicity and partly of its own synthesis in minimal medium. In Ralstonia nicotianae (strain ATCC BAA-1114 / GMI1000) (Ralstonia solanacearum), this protein is Regulatory protein HrpB (hrpB).